The sequence spans 206 residues: High frequency lysogenization protein HflD homolog (206 aa).

Belongs to the HflD family.

The protein localises to the cytoplasm. It localises to the cell inner membrane. In Pseudomonas savastanoi pv. phaseolicola (strain 1448A / Race 6) (Pseudomonas syringae pv. phaseolicola (strain 1448A / Race 6)), this protein is High frequency lysogenization protein HflD homolog.